Here is a 120-residue protein sequence, read N- to C-terminus: uncharacterized protein (120 aa).

A disordered region spans residues 80 to 99; sequence PTRKLQTPLNEPPRTWRKTA.

This is an uncharacterized protein from Goose circovirus (GoCV).